The sequence spans 428 residues: Enolase 1 (428 aa).

Gln-167 serves as a coordination point for (2R)-2-phosphoglycerate. Glu-209 (proton donor) is an active-site residue. Mg(2+)-binding residues include Asp-246, Glu-288, and Asp-315. Residues Lys-340, Arg-369, Ser-370, and Lys-391 each contribute to the (2R)-2-phosphoglycerate site. The active-site Proton acceptor is Lys-340.

Belongs to the enolase family. As to quaternary structure, component of the RNA degradosome, a multiprotein complex involved in RNA processing and mRNA degradation. Mg(2+) serves as cofactor.

It localises to the cytoplasm. Its subcellular location is the secreted. It is found in the cell surface. It carries out the reaction (2R)-2-phosphoglycerate = phosphoenolpyruvate + H2O. The protein operates within carbohydrate degradation; glycolysis; pyruvate from D-glyceraldehyde 3-phosphate: step 4/5. Catalyzes the reversible conversion of 2-phosphoglycerate (2-PG) into phosphoenolpyruvate (PEP). It is essential for the degradation of carbohydrates via glycolysis. This Pseudomonas syringae pv. tomato (strain ATCC BAA-871 / DC3000) protein is Enolase 1.